Reading from the N-terminus, the 54-residue chain is ATP synthase F(0) complex subunit 8 (54 aa).

A helical membrane pass occupies residues 13–35; it reads ALSLWVCFPLMMLSLSSFLPLTL.

This sequence belongs to the ATPase protein 8 family. Component of the ATP synthase complex composed at least of ATP5F1A/subunit alpha, ATP5F1B/subunit beta, ATP5MC1/subunit c (homooctomer), MT-ATP6/subunit a, MT-ATP8/subunit 8, ATP5ME/subunit e, ATP5MF/subunit f, ATP5MG/subunit g, ATP5MK/subunit k, ATP5MJ/subunit j, ATP5F1C/subunit gamma, ATP5F1D/subunit delta, ATP5F1E/subunit epsilon, ATP5PF/subunit F6, ATP5PB/subunit b, ATP5PD/subunit d, ATP5PO/subunit OSCP. ATP synthase complex consists of a soluble F(1) head domain (subunits alpha(3) and beta(3)) - the catalytic core - and a membrane F(0) domain - the membrane proton channel (subunits c, a, 8, e, f, g, k and j). These two domains are linked by a central stalk (subunits gamma, delta, and epsilon) rotating inside the F1 region and a stationary peripheral stalk (subunits F6, b, d, and OSCP).

The protein resides in the mitochondrion membrane. Functionally, subunit 8, of the mitochondrial membrane ATP synthase complex (F(1)F(0) ATP synthase or Complex V) that produces ATP from ADP in the presence of a proton gradient across the membrane which is generated by electron transport complexes of the respiratory chain. ATP synthase complex consist of a soluble F(1) head domain - the catalytic core - and a membrane F(1) domain - the membrane proton channel. These two domains are linked by a central stalk rotating inside the F(1) region and a stationary peripheral stalk. During catalysis, ATP synthesis in the catalytic domain of F(1) is coupled via a rotary mechanism of the central stalk subunits to proton translocation. In vivo, can only synthesize ATP although its ATP hydrolase activity can be activated artificially in vitro. Part of the complex F(0) domain. In Myxine glutinosa (Atlantic hagfish), this protein is ATP synthase F(0) complex subunit 8.